A 92-amino-acid chain; its full sequence is Neuropeptide ShK-like2 (92 aa).

An N-terminal signal peptide occupies residues 1–23; that stretch reads MTTIRCVLFAVLLFAYCALLIKA. A propeptide spanning residues 24 to 51 is cleaved from the precursor; the sequence is RSIDAEAEKTWQEEETKTVAEKSPLKKR. 3 disulfides stabilise this stretch: Cys53–Cys92, Cys61–Cys85, and Cys70–Cys89.

Transcripts are first expressed mostly in the endoderm (with rare ectodermal cells) in the late planulae. They are mostly expressed in endodermal ganglion cells in the body column and tentacles in primary polyps, as well as in a small number of ectodermal sensory neurons in tentacles and body wall. They are not expressed in nematocytes. As to expression, transcripts are predominantly expressed in ectodermal sensory neurons in early and late planulae. They are expressed in endodermal ganglion cells in the body column and tentacles in primary polyps, as well as in a small number of ectodermal neurons in pharynx. They are not expressed in nematocytes.

Its function is as follows. In vivo, this neuropeptide induces contraction paralysis followed by death (within 2 hours) on 4 zebrafish larvae on the 15 tested. Also induces body contraction in Nematostella 11-dpf polyps. The polypeptide is Neuropeptide ShK-like2 (Nematostella vectensis (Starlet sea anemone)).